The primary structure comprises 204 residues: Probable molybdenum cofactor guanylyltransferase (204 aa).

GTP is bound by residues 10-12, Lys-22, Asp-75, and Asp-104; that span reads LSG. Residue Asp-104 coordinates Mg(2+).

It belongs to the MobA family. Requires Mg(2+) as cofactor.

It is found in the cytoplasm. It catalyses the reaction Mo-molybdopterin + GTP + H(+) = Mo-molybdopterin guanine dinucleotide + diphosphate. In terms of biological role, transfers a GMP moiety from GTP to Mo-molybdopterin (Mo-MPT) cofactor (Moco or molybdenum cofactor) to form Mo-molybdopterin guanine dinucleotide (Mo-MGD) cofactor. The sequence is that of Probable molybdenum cofactor guanylyltransferase from Methanocaldococcus jannaschii (strain ATCC 43067 / DSM 2661 / JAL-1 / JCM 10045 / NBRC 100440) (Methanococcus jannaschii).